The primary structure comprises 2442 residues: METRSPGLNNMKPQSLQLVLEEQVLALQQQMAENQAASWRKLKNSQEAQQRQATLVRKLQAKVLQYRSWCQELEKRLEATGGPIPQRWENVEEPNLDELLVRLEEEQQRCESLAEVNTQLRLHMEKADVVNKALREDVEKLTVDWSRARDELMRKESQWQMEQEFFKGYLKGEHGRLLSLWREVVTFRRHFLEMKSATDRDLMELKAEHVRLSGSLLTCCLRLTVGAQSREPNGSGRMDGREPAQLLLLLAKTQELEKEAHERSQELIQLKSQGDLEKAELQDRVTELSALLTQSQKQNEDYEKMIKALRETVEILETNHTELMEHEASLSRNAQEEKLSLQQVIKDITQVMVEEGDNIAQGSGHENSLELDSSIFSQFDYQDADKALTLVRSVLTRRRQAVQDLRQQLAGCQEAVNLLQQQHDQWEEEGKALRQRLQKLTGERDTLAGQTVDLQGEVDSLSKERELLQKAREELRQQLEVLEQEAWRLRRVNVELQLQGDSAQGQKEEQQEELHLAVRERERLQEMLMGLEAKQSESLSELITLREALESSHLEGELLRQEQTEVTAALARAEQSIAELSSSENTLKTEVADLRAAAVKLSALNEALALDKVGLNQQLLQLEEENQSVCSRMEAAEQARNALQVDLAEAEKRREALWEKNTHLEAQLQKAEEAGAELQADLRDIQEEKEEIQKKLSESRHQQEAATTQLEQLHQEAKRQEEVLARAVQEKEALVREKAALEVRLQAVERDRQDLAEQLQGLSSAKELLESSLFEAQQQNSVIEVTKGQLEVQIQTVTQAKEVIQGEVRCLKLELDTERSQAEQERDAAARQLAQAEQEGKTALEQQKAAHEKEVNQLREKWEKERSWHQQELAKALESLEREKMELEMRLKEQQTEMEAIQAQREEERTQAESALCQMQLETEKERVSLLETLLQTQKELADASQQLERLRQDMKVQKLKEQETTGILQTQLQEAQRELKEAARQHRDDLAALQEESSSLLQDKMDLQKQVEDLKSQLVAQDDSQRLVEQEVQEKLRETQEYNRIQKELEREKASLTLSLMEKEQRLLVLQEADSIRQQELSALRQDMQEAQGEQKELSAQMELLRQEVKEKEADFLAQEAQLLEELEASHITEQQLRASLWAQEAKAAQLQLRLRSTESQLEALAAEQQPGNQAQAQAQLASLYSALQQALGSVCESRPELSGGGDSAPSVWGLEPDQNGARSLFKRGPLLTALSAEAVASALHKLHQDLWKTQQTRDVLRDQVQKLEERLTDTEAEKSQVHTELQDLQRQLSQNQEEKSKWEGKQNSLESELMELHETMASLQSRLRRAELQRMEAQGERELLQAAKENLTAQVEHLQAAVVEARAQASAAGILEEDLRTARSALKLKNEEVESERERAQALQEQGELKVAQGKALQENLALLTQTLAEREEEVETLRGQIQELEKQREMQKAALELLSLDLKKRNQEVDLQQEQIQELEKCRSVLEHLPMAVQEREQKLTVQREQIRELEKDRETQRNVLEHQLLELEKKDQMIESQRGQVQDLKKQLVTLECLALELEENHHKMECQQKLIKELEGQRETQRVALTHLTLDLEERSQELQAQSSQIHDLESHSTVLARELQERDQEVKSQREQIEELQRQKEHLTQDLERRDQELMLQKERIQVLEDQRTRQTKILEEDLEQIKLSLRERGRELTTQRQLMQERAEEGKGPSKAQRGSLEHMKLILRDKEKEVECQQEHIHELQELKDQLEQQLQGLHRKVGETSLLLSQREQEIVVLQQQLQEAREQGELKEQSLQSQLDEAQRALAQRDQELEALQQEQQQAQGQEERVKEKADALQGALEQAHMTLKERHGELQDHKEQARRLEEELAVEGRRVQALEEVLGDLRAESREQEKALLALQQQCAEQAQEHEVETRALQDSWLQAQAVLKERDQELEALRAESQSSRHQEEAARARAEALQEALGKAHAALQGKEQHLLEQAELSRSLEASTATLQASLDACQAHSRQLEEALRIQEGEIQDQDLRYQEDVQQLQQALAQRDEELRHQQEREQLLEKSLAQRVQENMIQEKQNLGQEREEEEIRGLHQSVRELQLTLAQKEQEILELRETQQRNNLEALPHSHKTSPMEEQSLKLDSLEPRLQRELERLQAALRQTEAREIEWREKAQDLALSLAQTKASVSSLQEVAMFLQASVLERDSEQQRLQDELELTRRALEKERLHSPGATSTAELGSRGEQGVQLGEVSGVEAEPSPDGMEKQSWRQRLEHLQQAVARLEIDRSRLQRHNVQLRSTLEQVERERRKLKREAMRAAQAGSLEISKATASSPTQQDGRGQKNSDAKCVAELQKEVVLLQAQLTLERKQKQDYITRSAQTSRELAGLHHSLSHSLLAVAQAPEATVLEAETRRLDESLTQSLTSPGPVLLHPSPSTTQAASR.

4 coiled-coil regions span residues N95–Q158, A244–M352, L395–P1172, and S1243–L2227. 2 stretches are compositionally biased toward basic and acidic residues: residues L1273–D1289 and L1699–G1715. Disordered regions lie at residues L1273–Q1308, L1699–E1725, and E1820–K1839. Low complexity predominate over residues E1820–G1831. S2138 is subject to Phosphoserine. T2218 carries the post-translational modification Phosphothreonine. The disordered stretch occupies residues E2223 to Q2244. Phosphoserine is present on residues S2229, S2252, and S2322. Positions G2262 to R2376 form a coiled coil. 2 disordered regions span residues R2307–D2345 and E2416–R2442. Over residues A2328–G2338 the composition is skewed to polar residues. Phosphoserine; by NEK2 occurs at positions 2417 and 2421. Residues S2433 to R2442 show a composition bias toward polar residues.

In terms of assembly, monomer and homodimer. Forms a complex in vitro with both NEK2 kinase and the PPP1CC catalytic subunit of protein phosphatase 1 (PP1). Interacts with CEP135. Interacts with CROCC/rootletin. Interacts with CNTLN. Interacts with NIN (via C-terminus). Interacts with CCDC102B (via N-terminus); the interaction results in recruitment of CCDC102B to the proximal ends of centrioles. Post-translationally, differentially phosphorylated during cell cycle. Phosphorylation may regulate association/dissociation from centrosome. During M phase of mitosis, C-terminal part is phosphorylated by NEK2, suggesting that it may trigger the dissociation from the mitotic centrosome. Dephosphorylated in vitro by the PP1 phosphatase. In terms of tissue distribution, ubiquitously and weakly expressed.

It is found in the cytoplasm. Its subcellular location is the perinuclear region. It localises to the cytoskeleton. The protein resides in the microtubule organizing center. The protein localises to the centrosome. It is found in the centriole. Its subcellular location is the cilium basal body. It localises to the cell projection. The protein resides in the cilium. The protein localises to the photoreceptor outer segment. It is found in the photoreceptor inner segment. Plays an important role in centrosome cohesion during interphase. Recruits CCDC102B to the proximal ends of centrioles. Maintains centrosome cohesion by forming intercentriolar linkages. Accumulates at the proximal end of each centriole, forming supramolecular assemblies with viscous material properties that promote organelle cohesion. May be involved in ciliogenesis. This is Centrosome-associated protein CEP250 (CEP250) from Homo sapiens (Human).